A 124-amino-acid polypeptide reads, in one-letter code: Holo-[acyl-carrier-protein] synthase (124 aa).

2 residues coordinate Mg(2+): aspartate 8 and glutamate 60.

It belongs to the P-Pant transferase superfamily. AcpS family. Requires Mg(2+) as cofactor.

The protein resides in the cytoplasm. The catalysed reaction is apo-[ACP] + CoA = holo-[ACP] + adenosine 3',5'-bisphosphate + H(+). In terms of biological role, transfers the 4'-phosphopantetheine moiety from coenzyme A to a Ser of acyl-carrier-protein. The protein is Holo-[acyl-carrier-protein] synthase of Wolbachia pipientis subsp. Culex pipiens (strain wPip).